The chain runs to 471 residues: UDP-N-acetylmuramoylalanine--D-glutamate ligase (471 aa).

127–133 (GSNGKST) serves as a coordination point for ATP.

This sequence belongs to the MurCDEF family.

The protein localises to the cytoplasm. The catalysed reaction is UDP-N-acetyl-alpha-D-muramoyl-L-alanine + D-glutamate + ATP = UDP-N-acetyl-alpha-D-muramoyl-L-alanyl-D-glutamate + ADP + phosphate + H(+). The protein operates within cell wall biogenesis; peptidoglycan biosynthesis. Cell wall formation. Catalyzes the addition of glutamate to the nucleotide precursor UDP-N-acetylmuramoyl-L-alanine (UMA). In Colwellia psychrerythraea (strain 34H / ATCC BAA-681) (Vibrio psychroerythus), this protein is UDP-N-acetylmuramoylalanine--D-glutamate ligase.